The following is a 316-amino-acid chain: Ribose-phosphate pyrophosphokinase (316 aa).

Residues D37–E39 and R96–Q97 each bind ATP. Positions 130 and 171 each coordinate Mg(2+). The active site involves K194. D-ribose 5-phosphate is bound by residues R196 and D221.

It belongs to the ribose-phosphate pyrophosphokinase family. Class I subfamily. As to quaternary structure, homohexamer. It depends on Mg(2+) as a cofactor.

The protein resides in the cytoplasm. It catalyses the reaction D-ribose 5-phosphate + ATP = 5-phospho-alpha-D-ribose 1-diphosphate + AMP + H(+). It participates in metabolic intermediate biosynthesis; 5-phospho-alpha-D-ribose 1-diphosphate biosynthesis; 5-phospho-alpha-D-ribose 1-diphosphate from D-ribose 5-phosphate (route I): step 1/1. Its function is as follows. Involved in the biosynthesis of the central metabolite phospho-alpha-D-ribosyl-1-pyrophosphate (PRPP) via the transfer of pyrophosphoryl group from ATP to 1-hydroxyl of ribose-5-phosphate (Rib-5-P). This is Ribose-phosphate pyrophosphokinase from Rhodopirellula baltica (strain DSM 10527 / NCIMB 13988 / SH1).